The primary structure comprises 856 residues: MAP kinase phosphatase with leucine-rich repeats protein 3 (856 aa).

Residues 1–10 (MGNSHSSENG) are compositionally biased toward low complexity. Disordered stretches follow at residues 1–24 (MGNSHSSENGGNSGSGGGSGGGGS), 84–195 (VKKN…SSVL), and 214–326 (DDNS…NAKD). Residue Gly-2 is the site of N-myristoyl glycine attachment. Gly residues predominate over residues 11–24 (GNSGSGGGSGGGGS). The segment covering 90–142 (NSSNNNSNNNSNNNNNNNTLNNSTIITTTTTTTTTSTPTTTIMITPPQQQQQQ) has biased composition (low complexity). Over residues 155–165 (ESSTPNEQQIR) the composition is skewed to polar residues. Composition is skewed to low complexity over residues 178-195 (ESSFLKSSPVPSPSSSVL) and 224-243 (QQQQQQQNEDSKQSSQQQTQ). Polar residues-rich tracts occupy residues 254 to 265 (IVNNKSSSTTNI) and 272 to 281 (AQTSRSTSIP). The span at 306 to 323 (NSLSSSNIITPNNTTNTN) shows a compositional bias: low complexity. LRR repeat units lie at residues 344–365 (KIFSLDLSINRLENITNDILSI), 370–391 (EIQELTLSTNFFQIIPDLQLVK), 392–413 (SLTTVNLTRNKLSKLQTSVFIE), 416–437 (SLTSLILDRNFISSIPDDIDQI), 439–461 (NLKYLSIKHNALEYLPNSLSNLS), 462–484 (QLISLDLSQNKLKTLPPNFDDLI), 485–506 (NLRMVWLSYNQITSLPSMRKLV), and 507–528 (NLVTFDISSNKLLSLPKDFAYL). Residues 554-577 (NINSNNNDSNNSNNNNNNNNDNNN) form a disordered region. The 142-residue stretch at 632–773 (IPSEIIPGIF…LLKYEAKLFC (142 aa)) folds into the Tyrosine-protein phosphatase domain. Cys-717 serves as the catalytic Phosphocysteine intermediate. The disordered stretch occupies residues 810-856 (INNSSNSNNNNSTDNSNNSSTSTTPNLSSLSSDSSSSASLSKLSISK).

Belongs to the protein-tyrosine phosphatase family. Non-receptor class dual specificity subfamily.

The catalysed reaction is O-phospho-L-tyrosyl-[protein] + H2O = L-tyrosyl-[protein] + phosphate. It catalyses the reaction O-phospho-L-seryl-[protein] + H2O = L-seryl-[protein] + phosphate. It carries out the reaction O-phospho-L-threonyl-[protein] + H2O = L-threonyl-[protein] + phosphate. Its function is as follows. Probable phosphatase with dual specificity toward Ser/Thr and Tyr-containing proteins. The protein is MAP kinase phosphatase with leucine-rich repeats protein 3 (mpl3) of Dictyostelium discoideum (Social amoeba).